We begin with the raw amino-acid sequence, 54 residues long: Large ribosomal subunit protein bL33 (54 aa).

Belongs to the bacterial ribosomal protein bL33 family.

This chain is Large ribosomal subunit protein bL33, found in Parafrankia sp. (strain EAN1pec).